The primary structure comprises 104 residues: Large ribosomal subunit protein uL24 (104 aa).

It belongs to the universal ribosomal protein uL24 family. As to quaternary structure, part of the 50S ribosomal subunit.

Its function is as follows. One of two assembly initiator proteins, it binds directly to the 5'-end of the 23S rRNA, where it nucleates assembly of the 50S subunit. Functionally, one of the proteins that surrounds the polypeptide exit tunnel on the outside of the subunit. The polypeptide is Large ribosomal subunit protein uL24 (Chelativorans sp. (strain BNC1)).